The chain runs to 132 residues: Small ribosomal subunit protein uS8 (132 aa).

Belongs to the universal ribosomal protein uS8 family. As to quaternary structure, part of the 30S ribosomal subunit. Contacts proteins S5 and S12.

One of the primary rRNA binding proteins, it binds directly to 16S rRNA central domain where it helps coordinate assembly of the platform of the 30S subunit. This chain is Small ribosomal subunit protein uS8, found in Streptococcus equi subsp. equi (strain 4047).